Reading from the N-terminus, the 296-residue chain is MTTITPIMVKELRERTGAAVMACKKALQETNGDMEAAIDLLRKAGDAKAAKRAGKTAAEGVIVIAISKDQKKGFMAEVNSETDFVARDTNFMAFASKVAERGLAEGVSDVAATLALPIEPNSSSTIEDERKALVNRIGENIQIRRVASLSSDGVVGHYSHGGRIGVLLALDVPNPELAKGLAMHVAAFNPQAVSANQVSTEFVEKEKEIFLARAQETGKPANIIEKMVKGQVEKLLKEVSLEGQSFVKDPEKLVGDLLKAEKAKVLAFLRFEVGEGVEKESQNFADEVMAQVQGNR.

Positions 82 to 85 (TDFV) are involved in Mg(2+) ion dislocation from EF-Tu.

The protein belongs to the EF-Ts family.

The protein localises to the cytoplasm. Functionally, associates with the EF-Tu.GDP complex and induces the exchange of GDP to GTP. It remains bound to the aminoacyl-tRNA.EF-Tu.GTP complex up to the GTP hydrolysis stage on the ribosome. This chain is Elongation factor Ts, found in Coxiella burnetii (strain CbuG_Q212) (Coxiella burnetii (strain Q212)).